Reading from the N-terminus, the 268-residue chain is Ribosomal RNA small subunit methyltransferase A (268 aa).

Residues Asn-18, Leu-20, Gly-45, Glu-66, Asp-91, and Asn-112 each coordinate S-adenosyl-L-methionine.

The protein belongs to the class I-like SAM-binding methyltransferase superfamily. rRNA adenine N(6)-methyltransferase family. RsmA subfamily.

It localises to the cytoplasm. It carries out the reaction adenosine(1518)/adenosine(1519) in 16S rRNA + 4 S-adenosyl-L-methionine = N(6)-dimethyladenosine(1518)/N(6)-dimethyladenosine(1519) in 16S rRNA + 4 S-adenosyl-L-homocysteine + 4 H(+). Specifically dimethylates two adjacent adenosines (A1518 and A1519) in the loop of a conserved hairpin near the 3'-end of 16S rRNA in the 30S particle. May play a critical role in biogenesis of 30S subunits. This is Ribosomal RNA small subunit methyltransferase A from Shewanella baltica (strain OS223).